The primary structure comprises 496 residues: 2,3-bisphosphoglycerate-independent phosphoglycerate mutase (496 aa).

Mn(2+)-binding residues include aspartate 12 and serine 62. Serine 62 functions as the Phosphoserine intermediate in the catalytic mechanism. Residues histidine 121, 150 to 151 (RD), arginine 181, arginine 187, 252 to 255 (RNDR), and lysine 317 each bind substrate. Mn(2+) contacts are provided by aspartate 384, histidine 388, aspartate 425, histidine 426, and histidine 444.

The protein belongs to the BPG-independent phosphoglycerate mutase family. Monomer. Requires Mn(2+) as cofactor.

The catalysed reaction is (2R)-2-phosphoglycerate = (2R)-3-phosphoglycerate. It functions in the pathway carbohydrate degradation; glycolysis; pyruvate from D-glyceraldehyde 3-phosphate: step 3/5. In terms of biological role, catalyzes the interconversion of 2-phosphoglycerate and 3-phosphoglycerate. The polypeptide is 2,3-bisphosphoglycerate-independent phosphoglycerate mutase (Anaplasma phagocytophilum (strain HZ)).